A 71-amino-acid polypeptide reads, in one-letter code: Small ribosomal subunit protein bS18 (71 aa).

It belongs to the bacterial ribosomal protein bS18 family. Part of the 30S ribosomal subunit. Forms a tight heterodimer with protein bS6.

Functionally, binds as a heterodimer with protein bS6 to the central domain of the 16S rRNA, where it helps stabilize the platform of the 30S subunit. The chain is Small ribosomal subunit protein bS18 from Nostoc punctiforme (strain ATCC 29133 / PCC 73102).